The following is a 446-amino-acid chain: Maltoporin (446 aa).

Residues 1–25 (MMITLRKLPLAVAVAAGVMSAQAMA) form the signal peptide.

Belongs to the porin LamB (TC 1.B.3) family. Homotrimer formed of three 18-stranded antiparallel beta-barrels, containing three independent channels.

The protein resides in the cell outer membrane. The catalysed reaction is beta-maltose(in) = beta-maltose(out). Functionally, involved in the transport of maltose and maltodextrins. The sequence is that of Maltoporin from Escherichia coli O157:H7 (strain EC4115 / EHEC).